A 278-amino-acid chain; its full sequence is Large ribosomal subunit protein uL2 (278 aa).

Disordered stretches follow at residues 33 to 53 (LTEG…TSRG) and 221 to 278 (RGVA…KKKR). Residues 269 to 278 (IRSRHAKKKR) show a composition bias toward basic residues.

It belongs to the universal ribosomal protein uL2 family. In terms of assembly, part of the 50S ribosomal subunit. Forms a bridge to the 30S subunit in the 70S ribosome.

One of the primary rRNA binding proteins. Required for association of the 30S and 50S subunits to form the 70S ribosome, for tRNA binding and peptide bond formation. It has been suggested to have peptidyltransferase activity; this is somewhat controversial. Makes several contacts with the 16S rRNA in the 70S ribosome. The chain is Large ribosomal subunit protein uL2 from Novosphingobium aromaticivorans (strain ATCC 700278 / DSM 12444 / CCUG 56034 / CIP 105152 / NBRC 16084 / F199).